The chain runs to 239 residues: Methylthioribulose-1-phosphate dehydratase (239 aa).

Cysteine 94 lines the substrate pocket. Zn(2+) is bound by residues histidine 112 and histidine 114. Glutamate 136 acts as the Proton donor/acceptor in catalysis. A Zn(2+)-binding site is contributed by histidine 192.

The protein belongs to the aldolase class II family. MtnB subfamily. Zn(2+) serves as cofactor.

Its subcellular location is the cytoplasm. It catalyses the reaction 5-(methylsulfanyl)-D-ribulose 1-phosphate = 5-methylsulfanyl-2,3-dioxopentyl phosphate + H2O. It participates in amino-acid biosynthesis; L-methionine biosynthesis via salvage pathway; L-methionine from S-methyl-5-thio-alpha-D-ribose 1-phosphate: step 2/6. Functionally, catalyzes the dehydration of methylthioribulose-1-phosphate (MTRu-1-P) into 2,3-diketo-5-methylthiopentyl-1-phosphate (DK-MTP-1-P). Functions in the methionine salvage pathway. May play a role in apoptosis. This chain is Methylthioribulose-1-phosphate dehydratase, found in Aquarana catesbeiana (American bullfrog).